The following is a 164-amino-acid chain: Endoribonuclease YbeY (164 aa).

Zn(2+) contacts are provided by H120, H124, and H130.

Belongs to the endoribonuclease YbeY family. Zn(2+) is required as a cofactor.

The protein resides in the cytoplasm. Single strand-specific metallo-endoribonuclease involved in late-stage 70S ribosome quality control and in maturation of the 3' terminus of the 16S rRNA. This chain is Endoribonuclease YbeY, found in Acidothermus cellulolyticus (strain ATCC 43068 / DSM 8971 / 11B).